We begin with the raw amino-acid sequence, 359 residues long: HTH-type transcriptional regulator Rv3575c (359 aa).

The 56-residue stretch at 9–64 (ATLASLAAELKVSRTTVSNAFNRPDQLSADLRERVLATAKRLGYAGPDPVARSLRT) folds into the HTH lacI-type domain. Residues 11 to 30 (LASLAAELKVSRTTVSNAFN) constitute a DNA-binding region (H-T-H motif).

In terms of biological role, transcriptional regulator that negatively regulates transcription of the mce4 operon, which is involved in cholesterol transport and utilization. Acts by binding to the promoter region of the mce4 operon. It affects the utilization of host cholesterol as a carbon source, impacting the host's innate immune response. The sequence is that of HTH-type transcriptional regulator Rv3575c from Mycobacterium tuberculosis (strain ATCC 25618 / H37Rv).